A 381-amino-acid chain; its full sequence is Cytochrome b (381 aa).

Transmembrane regions (helical) follow at residues 34–54, 78–99, 114–134, and 179–199; these read FGSL…FLAM, WLIR…YFHI, WNIG…GYVL, and FFAF…IHIL. Positions 84 and 98 each coordinate heme b. Heme b-binding residues include His183 and His197. His202 serves as a coordination point for a ubiquinone. The next 4 membrane-spanning stretches (helical) occupy residues 227 to 247, 289 to 309, 321 to 341, and 348 to 368; these read YKDA…ALFL, LGGV…PFLH, LTQV…WIGG, and FILI…IAIP.

Belongs to the cytochrome b family. As to quaternary structure, the cytochrome bc1 complex contains 3 respiratory subunits (MT-CYB, CYC1 and UQCRFS1), 2 core proteins (UQCRC1 and UQCRC2) and probably 6 low-molecular weight proteins. Heme b serves as cofactor.

The protein localises to the mitochondrion inner membrane. Functionally, component of the ubiquinol-cytochrome c reductase complex (complex III or cytochrome b-c1 complex) that is part of the mitochondrial respiratory chain. The b-c1 complex mediates electron transfer from ubiquinol to cytochrome c. Contributes to the generation of a proton gradient across the mitochondrial membrane that is then used for ATP synthesis. The chain is Cytochrome b (mt-cyb) from Carcharodon carcharias (Great white shark).